Here is a 349-residue protein sequence, read N- to C-terminus: Probable L-asparaginase periplasmic (349 aa).

A signal peptide spans 1-21 (MKLTKLALCTLFGLGVSIANA). Residues 25 to 349 (PNITILATGG…KVIQQYFEDF (325 aa)) enclose the Asparaginase/glutaminase domain. The active-site O-isoaspartyl threonine intermediate is threonine 35. Residues serine 81 and 112–113 (TD) each bind substrate. Residues cysteine 100 and cysteine 128 are joined by a disulfide bond.

The protein belongs to the asparaginase 1 family.

Its subcellular location is the periplasm. It catalyses the reaction L-asparagine + H2O = L-aspartate + NH4(+). The polypeptide is Probable L-asparaginase periplasmic (ansB) (Haemophilus influenzae (strain ATCC 51907 / DSM 11121 / KW20 / Rd)).